The primary structure comprises 299 residues: Probable lipid kinase YegS (299 aa).

A DAGKc domain is found at Ala2 to Thr133. ATP is bound by residues Thr40, Gly66–Glu72, and Thr95. Residues Leu215, Asp218, and Leu220 each coordinate Mg(2+). Catalysis depends on Glu271, which acts as the Proton acceptor.

It belongs to the diacylglycerol/lipid kinase family. YegS lipid kinase subfamily. Mg(2+) is required as a cofactor. Ca(2+) serves as cofactor.

Its subcellular location is the cytoplasm. Its function is as follows. Probably phosphorylates lipids; the in vivo substrate is unknown. This is Probable lipid kinase YegS from Shigella boydii serotype 18 (strain CDC 3083-94 / BS512).